The following is a 501-amino-acid chain: Cobyric acid synthase (501 aa).

One can recognise a GATase cobBQ-type domain in the interval 253-450 (EIEIAVLKLP…LHGIFENGRW (198 aa)). Cys-334 serves as the catalytic Nucleophile. His-442 is a catalytic residue.

Belongs to the CobB/CobQ family. CobQ subfamily.

It participates in cofactor biosynthesis; adenosylcobalamin biosynthesis. Its function is as follows. Catalyzes amidations at positions B, D, E, and G on adenosylcobyrinic A,C-diamide. NH(2) groups are provided by glutamine, and one molecule of ATP is hydrogenolyzed for each amidation. The chain is Cobyric acid synthase from Prochlorococcus marinus (strain MIT 9313).